Consider the following 238-residue polypeptide: Probable transcriptional regulatory protein CTA_0499 (238 aa).

The segment at 1 to 21 (MAGHSKWANTKHRKERADHKK) is disordered. Basic residues predominate over residues 9–21 (NTKHRKERADHKK).

The protein belongs to the TACO1 family.

It localises to the cytoplasm. This is Probable transcriptional regulatory protein CTA_0499 from Chlamydia trachomatis serovar A (strain ATCC VR-571B / DSM 19440 / HAR-13).